Here is a 213-residue protein sequence, read N- to C-terminus: Probable thiopurine S-methyltransferase (213 aa).

Residues tryptophan 10, leucine 45, glutamate 66, and arginine 125 each contribute to the S-adenosyl-L-methionine site.

Belongs to the class I-like SAM-binding methyltransferase superfamily. TPMT family.

The protein resides in the cytoplasm. It carries out the reaction S-adenosyl-L-methionine + a thiopurine = S-adenosyl-L-homocysteine + a thiopurine S-methylether.. This chain is Probable thiopurine S-methyltransferase, found in Yarrowia lipolytica (strain CLIB 122 / E 150) (Yeast).